Here is a 94-residue protein sequence, read N- to C-terminus: NADH-ubiquinone oxidoreductase 10.5 kDa subunit (94 aa).

It belongs to the complex I NDUFA2 subunit family. Complex I is composed of about 40 different subunits.

It localises to the mitochondrion inner membrane. Accessory subunit of the mitochondrial membrane respiratory chain NADH dehydrogenase (Complex I), that is believed not to be involved in catalysis. Complex I functions in the transfer of electrons from NADH to the respiratory chain. The immediate electron acceptor for the enzyme is believed to be ubiquinone. In Neurospora crassa (strain ATCC 24698 / 74-OR23-1A / CBS 708.71 / DSM 1257 / FGSC 987), this protein is NADH-ubiquinone oxidoreductase 10.5 kDa subunit (nuo-10.5).